The chain runs to 540 residues: Beta-2-syntrophin (540 aa).

Positions 73–114 (LPNGGGAGDSLPGSPSRGLGPPSPPAPPRGPAGEAGASPPVR) are disordered. The span at 81 to 92 (DSLPGSPSRGLG) shows a compositional bias: low complexity. The segment covering 93–102 (PPSPPAPPRG) has biased composition (pro residues). Residues Ser-95, Ser-110, Ser-129, Ser-211, Ser-222, Ser-233, Ser-393, and Ser-395 each carry the phosphoserine modification. Residues 103-112 (PAGEAGASPP) show a composition bias toward low complexity. A PDZ domain is found at 115–198 (RVRVVKQEAG…EVLLEVKFIR (84 aa)). 2 consecutive PH domains span residues 163 to 300 (ILSV…TNIM) and 325 to 437 (EVKH…QGCH). A disordered region spans residues 220-240 (PQSPSFSGSEDSGSPKHQNST). Residues 222–231 (SPSFSGSEDS) are compositionally biased toward low complexity. An SU domain is found at 484–540 (PFERLKMSADDGIRNLYLDFGGPEGELTMDLHSCPKPIVFVLHTFLSAKVTRMGLLV). Residues 518-540 (PKPIVFVLHTFLSAKVTRMGLLV) are calmodulin-binding.

The protein belongs to the syntrophin family. Monomer and homodimer. Interacts with the other members of the syntrophin family: SNTA1 and SNTB1; and with the sodium channel proteins SCN4A and SCN5A. Interacts with SAST, MAST205, microtubules and microtubule-associated proteins. Interacts with the dystrophin protein DMD and related proteins DTNA and UTRN, and with the neuroregulin receptor ERBB4. Interacts with PTPRN when phosphorylated, protecting PTPRN from protein cleavage by CAPN1. Dephosphorylation upon insulin stimulation disrupts the interaction with PTPRN and results in the cleavage of PTPRN. Interacts with DTNB. Post-translationally, phosphorylated. Partially dephosphorylated upon insulin stimulation. In terms of tissue distribution, ubiquitous. Isoform 1 is the predominant isoform. Weak level of isoform 2 is present in all tested tissues, except in liver and heart where it is highly expressed.

It localises to the membrane. The protein resides in the cytoplasmic vesicle. Its subcellular location is the secretory vesicle membrane. It is found in the cell junction. The protein localises to the cytoplasm. It localises to the cytoskeleton. Adapter protein that binds to and probably organizes the subcellular localization of a variety of membrane proteins. May link various receptors to the actin cytoskeleton and the dystrophin glycoprotein complex. May play a role in the regulation of secretory granules via its interaction with PTPRN. This chain is Beta-2-syntrophin (SNTB2), found in Homo sapiens (Human).